The primary structure comprises 219 residues: Large ribosomal subunit protein uL4c (219 aa).

The segment at 53–81 (REHTASTKTKSQVRGGGKKPWKQKGTGRA) is disordered. Residues 68–79 (GGKKPWKQKGTG) are compositionally biased toward basic residues.

This sequence belongs to the universal ribosomal protein uL4 family. In terms of assembly, part of the 50S ribosomal subunit.

The protein resides in the plastid. The protein localises to the chloroplast. Functionally, probably binds the 23S rRNA. This is Large ribosomal subunit protein uL4c (rpl4) from Cyanidium caldarium (Red alga).